We begin with the raw amino-acid sequence, 611 residues long: Zinc metalloproteinase nas-31 (611 aa).

An N-terminal signal peptide occupies residues 1 to 17 (MILQLLFYSLFTHLAVS). A propeptide spanning residues 18–158 (QIDVNQALNQ…TVSTASRARR (141 aa)) is cleaved from the precursor. 2 N-linked (GlcNAc...) asparagine glycosylation sites follow: N53 and N67. A compositionally biased stretch (polar residues) spans 82–95 (NAGTNQENGATEQQ). The disordered stretch occupies residues 82–103 (NAGTNQENGATEQQKPLREKPR). Residues 159-354 (QAYRDRYYPS…SMMNEHYKCK (196 aa)) form the Peptidase M12A domain. An N-linked (GlcNAc...) asparagine glycan is attached at N200. 9 cysteine pairs are disulfide-bonded: C203–C353, C224–C243, C357–C376, C379–C390, C397–C428, C455–C476, C532–C564, C539–C557, and C548–C561. H251 provides a ligand contact to Zn(2+). Residue E252 is part of the active site. Zn(2+) is bound by residues H255 and H261. The EGF-like domain maps to 340–396 (GFYDISMMNEHYKCKELCPAASSAQCKNGGFPSPRNCAICICPSGYGGILCDQRPPG). A CUB domain is found at 397-516 (CGDSVTATTT…LEYRAVTPSV (120 aa)). N424 carries N-linked (GlcNAc...) asparagine glycosylation. In terms of domain architecture, ShKT spans 532–564 (CQDLHPNCDFYKFFGMCRSKKIRSNCKFTCHDC).

The cofactor is Zn(2+). As to expression, expressed in excretory cell and in amphid and phasmid sheath glia.

Its subcellular location is the secreted. Metalloprotease. This chain is Zinc metalloproteinase nas-31 (nas-31), found in Caenorhabditis elegans.